The chain runs to 366 residues: Galactoside alpha-(1,2)-fucosyltransferase 1 (366 aa).

The Cytoplasmic segment spans residues 1 to 8 (MWPLSHRH). The chain crosses the membrane as a helical; Signal-anchor for type II membrane protein span at residues 9-25 (LCLAFLLVCVLSAISFF). Residues 26-366 (LHIHQDSFRH…LSPLWTLAEP (341 aa)) are Lumenal-facing. Asn-66, Asn-302, and Asn-328 each carry an N-linked (GlcNAc...) asparagine glycan.

It belongs to the glycosyltransferase 11 family.

It localises to the golgi apparatus. It is found in the golgi stack membrane. The enzyme catalyses a beta-D-galactosyl-(1-&gt;4)-N-acetyl-beta-D-glucosaminyl derivative + GDP-beta-L-fucose = an alpha-L-Fuc-(1-&gt;2)-beta-D-Gal-(1-&gt;4)-beta-D-GlcNAc derivative + GDP + H(+). It catalyses the reaction a ganglioside GA1 + GDP-beta-L-fucose = a ganglioside Fuc-GA1 + GDP + H(+). The catalysed reaction is a beta-D-Gal-(1-&gt;3)-beta-D-GlcNAc-(1-&gt;3)-beta-D-Gal-(1-&gt;4)-beta-D-Glc-(1&lt;-&gt;1')-Cer(d18:1(4E)) + GDP-beta-L-fucose = alpha-L-fucosyl-(1-&gt;2)- beta-D-galactosyl-(1-&gt;3)-N-acetyl-beta-D-glucosaminyl-(1-&gt;3)-beta-D-galactosyl-(1-&gt;4)-beta-D-glucosyl-(1&lt;-&gt;1')-N-acylsphing-4-enine + GDP + H(+). It carries out the reaction a neolactoside nLc4Cer(d18:1(4E)) + GDP-beta-L-fucose = a neolactoside IV(2)-alpha-Fuc-nLc4Cer(d18:1(4E)) + GDP + H(+). The enzyme catalyses a ganglioside GM1 + GDP-beta-L-fucose = a ganglioside Fuc-GM1 + GDP + H(+). It catalyses the reaction beta-D-galactosyl-(1-&gt;3)-N-acetyl-D-galactosamine + GDP-beta-L-fucose = alpha-L-fucosyl-(1-&gt;2)-beta-D-galactosyl-(1-&gt;3)-N-acetyl-D-galactosamine + GDP + H(+). The protein operates within protein modification; protein glycosylation. Functionally, catalyzes the transfer of L-fucose, from a guanosine diphosphate-beta-L-fucose, to the terminal galactose residue of glycoconjugates through an alpha(1,2) linkage leading to H antigen synthesis that is an intermediate substrate in the synthesis of ABO blood group antigens. H antigen is essential for maturation of the glomerular layer of the main olfactory bulb, in cell migration and early cell-cell contacts during tumor associated angiogenesis. Preferentially fucosylates soluble lactose and to a lesser extent fucosylates glycolipids gangliosides GA1 and GM1a. This is Galactoside alpha-(1,2)-fucosyltransferase 1 from Plecturocebus brunneus (Brown titi monkey).